Reading from the N-terminus, the 321-residue chain is Probable pectate lyase A (321 aa).

Residues 1–20 form the signal peptide; sequence MANFKLFLALAACLSGQALA. Asn93 carries N-linked (GlcNAc...) asparagine glycosylation. Ca(2+)-binding residues include Asp134, Asp163, and Asp167. Residue Arg220 is part of the active site.

This sequence belongs to the polysaccharide lyase 1 family. Requires Ca(2+) as cofactor.

It localises to the secreted. It carries out the reaction Eliminative cleavage of (1-&gt;4)-alpha-D-galacturonan to give oligosaccharides with 4-deoxy-alpha-D-galact-4-enuronosyl groups at their non-reducing ends.. Pectinolytic enzyme consist of four classes of enzymes: pectin lyase, polygalacturonase, pectin methylesterase and rhamnogalacturonase. Among pectinolytic enzymes, pectin lyase is the most important in depolymerization of pectin, since it cleaves internal glycosidic bonds of highly methylated pectins. Favors pectate, the anion, over pectin, the methyl ester. The polypeptide is Probable pectate lyase A (plyA) (Aspergillus flavus (strain ATCC 200026 / FGSC A1120 / IAM 13836 / NRRL 3357 / JCM 12722 / SRRC 167)).